A 402-amino-acid chain; its full sequence is Zinc finger CCHC domain-containing protein 12 (402 aa).

Residues 308 to 341 (IDSPHNSRAQFPSTSGGSGYKNNGPGEMRRARKR) are disordered. Positions 311–322 (PHNSRAQFPSTS) are enriched in polar residues. The segment at 345–362 (IRCSYCGEEGHSKETCDN) adopts a CCHC-type zinc-finger fold.

Belongs to the ZCCHC12 family. Interacts with SMAD1 and CREB-binding protein (CBP). Forms a protein-DNA complex through its association with SMAD1.

Functionally, transcriptional coactivator in the bone morphogenetic protein (BMP)-signaling pathway. It positively modulates BMP signaling by interacting with SMAD1 and associating with CBP in the transcription complex. It contributes to the BMP-induced enhancement of cholinergic-neuron-specific gene expression. The protein is Zinc finger CCHC domain-containing protein 12 (ZCCHC12) of Homo sapiens (Human).